A 103-amino-acid polypeptide reads, in one-letter code: PTS system oligo-beta-mannoside-specific EIIB component (103 aa).

The PTS EIIB type-3 domain maps to 1 to 103; sequence MKKILLACSS…EQALSLMVNQ (103 aa). C8 serves as the catalytic Phosphocysteine intermediate. At C8 the chain carries Phosphocysteine; by EIIA.

The protein localises to the cytoplasm. The catalysed reaction is D-cellobiose(out) + N(pros)-phospho-L-histidyl-[protein] = 6-phospho-beta-D-glucosyl-(1-&gt;4)-D-glucose(in) + L-histidyl-[protein]. Functionally, the phosphoenolpyruvate-dependent sugar phosphotransferase system (sugar PTS), a major carbohydrate active transport system, catalyzes the phosphorylation of incoming sugar substrates concomitantly with their translocation across the cell membrane. The enzyme II GmuABC PTS system is involved in the transport of oligo-glucomannans such as cellobiose or mannobiose. In Bacillus subtilis (strain 168), this protein is PTS system oligo-beta-mannoside-specific EIIB component.